The chain runs to 247 residues: Pleckstrin homology domain-containing family F member 2 (247 aa).

The 97-residue stretch at 35 to 131 folds into the PH domain; sequence VLIGEGVLTK…WMSHINKCVS (97 aa). An FYVE-type zinc finger spans residues 152-212; the sequence is DSEATVCMRC…VCEFCYKQLS (61 aa). Zn(2+) is bound by residues Cys158, Cys161, Cys175, Cys178, Cys183, Cys186, Cys204, and Cys207. Residues 213–247 form a disordered region; the sequence is TGATLPPRSDSYSRQGSDFGSNNISDDDDDDDSSD. Polar residues predominate over residues 222 to 236; the sequence is DSYSRQGSDFGSNNI. Over residues 237–247 the composition is skewed to acidic residues; sequence SDDDDDDDSSD.

The protein resides in the early endosome membrane. It localises to the endoplasmic reticulum. Its function is as follows. May play a role in early endosome fusion upstream of RAB5, hence regulating receptor trafficking and fluid-phase transport. Enhances cellular sensitivity to TNF-induced apoptosis. In Danio rerio (Zebrafish), this protein is Pleckstrin homology domain-containing family F member 2 (plekhf2).